The sequence spans 454 residues: Ribosomal protein uS12 methylthiotransferase RimO (454 aa).

Residues 19 to 129 (AKVGFVSLGC…VLAQVHEHVA (111 aa)) enclose the MTTase N-terminal domain. Residues C28, C64, C93, C161, C165, and C168 each coordinate [4Fe-4S] cluster. Residues 147 to 384 (LTPKHYAYLK…MAVQAKISSD (238 aa)) form the Radical SAM core domain. The 67-residue stretch at 387–453 (QVRIGQEYLI…EHDVWGVRVE (67 aa)) folds into the TRAM domain.

It belongs to the methylthiotransferase family. RimO subfamily. The cofactor is [4Fe-4S] cluster.

It localises to the cytoplasm. The enzyme catalyses L-aspartate(89)-[ribosomal protein uS12]-hydrogen + (sulfur carrier)-SH + AH2 + 2 S-adenosyl-L-methionine = 3-methylsulfanyl-L-aspartate(89)-[ribosomal protein uS12]-hydrogen + (sulfur carrier)-H + 5'-deoxyadenosine + L-methionine + A + S-adenosyl-L-homocysteine + 2 H(+). In terms of biological role, catalyzes the methylthiolation of an aspartic acid residue of ribosomal protein uS12. This Colwellia psychrerythraea (strain 34H / ATCC BAA-681) (Vibrio psychroerythus) protein is Ribosomal protein uS12 methylthiotransferase RimO.